Reading from the N-terminus, the 262-residue chain is NAD-dependent glucose-6-phosphate dehydrogenase (262 aa).

Positions 90, 115, 152, and 156 each coordinate NAD(+). Tyr152 serves as the catalytic Proton acceptor.

This sequence belongs to the NAD(P)-dependent epimerase/dehydratase family. In terms of assembly, homodimer.

It catalyses the reaction D-glucose 6-phosphate + NAD(+) = 6-phospho-D-glucono-1,5-lactone + NADH + H(+). It functions in the pathway carbohydrate degradation; pentose phosphate pathway. Functionally, catalyzes the NAD-dependent oxidation of glucose 6-phosphate to 6-phosphogluconolactone. This is NAD-dependent glucose-6-phosphate dehydrogenase from Haloferax volcanii (strain ATCC 29605 / DSM 3757 / JCM 8879 / NBRC 14742 / NCIMB 2012 / VKM B-1768 / DS2) (Halobacterium volcanii).